We begin with the raw amino-acid sequence, 1033 residues long: Putative U-box domain-containing protein 42 (1033 aa).

Positions 145–226 are disordered; that stretch reads SQSQMTDIPD…SSNASSQRKY (82 aa). Positions 200–226 are enriched in polar residues; the sequence is LSKSQSQSTEIPDIPSQSSNASSQRKY. A U-box domain is found at 245–322; that stretch reads PPYQAFICPL…QEWKVRNEAA (78 aa). 5 ARM repeats span residues 483–522, 523–562, 564–608, 610–659, and 665–704; these read PENIKQMAESGLLEPLLGHLAEGSEETQVAMAAYLVEIDI, GHEKKTYVAEKACPALIGLVQSENIDARRAAFKALAHISL, HPNN…NILE, GLEH…SLSK, and ATIVSVIKETDASFAMIELINNPHDELGVGALKLLIALTP.

It catalyses the reaction S-ubiquitinyl-[E2 ubiquitin-conjugating enzyme]-L-cysteine + [acceptor protein]-L-lysine = [E2 ubiquitin-conjugating enzyme]-L-cysteine + N(6)-ubiquitinyl-[acceptor protein]-L-lysine.. Its pathway is protein modification; protein ubiquitination. In terms of biological role, functions as an E3 ubiquitin ligase. In Arabidopsis thaliana (Mouse-ear cress), this protein is Putative U-box domain-containing protein 42 (PUB42).